The sequence spans 188 residues: Elongation factor P (188 aa).

It belongs to the elongation factor P family.

It is found in the cytoplasm. It participates in protein biosynthesis; polypeptide chain elongation. Its function is as follows. Involved in peptide bond synthesis. Stimulates efficient translation and peptide-bond synthesis on native or reconstituted 70S ribosomes in vitro. Probably functions indirectly by altering the affinity of the ribosome for aminoacyl-tRNA, thus increasing their reactivity as acceptors for peptidyl transferase. In Natranaerobius thermophilus (strain ATCC BAA-1301 / DSM 18059 / JW/NM-WN-LF), this protein is Elongation factor P.